Consider the following 182-residue polypeptide: Heat shock protein beta-2 (182 aa).

In terms of domain architecture, sHSP spans 55–163 (RAGEGGRAGA…DTEVNEVYIS (109 aa)).

The protein belongs to the small heat shock protein (HSP20) family. Interacts with DMPK; may enhance its kinase activity.

The protein resides in the cytoplasm. It localises to the nucleus. May regulate the kinase DMPK. This chain is Heat shock protein beta-2 (Hspb2), found in Rattus norvegicus (Rat).